A 355-amino-acid polypeptide reads, in one-letter code: Probable nitronate monooxygenase (355 aa).

Residues N71, Q175, G180, G218, and 237 to 240 contribute to the FMN site; that span reads QMGT.

This sequence belongs to the nitronate monooxygenase family. NMO class I subfamily. FMN serves as cofactor.

The enzyme catalyses 3 propionate 3-nitronate + 3 O2 + H2O = 3 3-oxopropanoate + 2 nitrate + nitrite + H2O2 + 3 H(+). Its function is as follows. Nitronate monooxygenase that uses molecular oxygen to catalyze the oxidative denitrification of alkyl nitronates. Acts on propionate 3-nitronate (P3N), the presumed physiological substrate. Probably functions in the detoxification of P3N, a metabolic poison produced by plants and fungi as a defense mechanism. The sequence is that of Probable nitronate monooxygenase from Staphylococcus aureus (strain USA300).